Reading from the N-terminus, the 402-residue chain is Tumor necrosis factor receptor superfamily member 11B (402 aa).

A signal peptide spans 1-21 (MNKLLCCALVFLDISIKWTTQ). 4 TNFR-Cys repeats span residues 24–62 (FPPKYLHYDPESSRQLMCDKCPPGTFLKQPCTARRKTVC), 64–105 (PCPD…NRVC), 106–142 (ECEEGRYLELEFCLKHRSCPPGFGVLHPGTPERNTVC), and 144–185 (RCPD…DNIC). 8 disulfide bridges follow: Cys41-Cys54, Cys44-Cys62, Cys65-Cys80, Cys83-Cys97, Cys87-Cys105, Cys107-Cys118, Cys124-Cys142, and Cys145-Cys160. N-linked (GlcNAc...) asparagine glycans are attached at residues Asn165 and Asn178. The cysteines at positions 166 and 185 are disulfide-linked. 2 Death domains span residues 198-269 (IDMT…DMVK) and 270-365 (KIIQ…VIQS).

In terms of assembly, homodimer. Interacts with TNFSF10 and TNFSF11. In terms of processing, N-glycosylated. Contains sialic acid residues.

It is found in the secreted. In terms of biological role, acts as a decoy receptor for TNFSF11/RANKL and thereby neutralizes its function in osteoclastogenesis. Inhibits the activation of osteoclasts and promotes osteoclast apoptosis. Bone homeostasis seems to depend on the local ratio between TNFSF11 and TNFRSF11B. May also play a role in preventing arterial calcification. May act as decoy receptor for TNFSF10/TRAIL and protect against apoptosis. TNFSF10/TRAIL binding blocks the inhibition of osteoclastogenesis. This is Tumor necrosis factor receptor superfamily member 11B (TNFRSF11B) from Bos taurus (Bovine).